A 1628-amino-acid chain; its full sequence is Centrosomal protein of 170 kDa protein B (1628 aa).

The FHA domain occupies 23–73 (IFVGREDCELMLQSRSVDKQHAVINYDSDKDEHRVKDLGSLNGTFVNDVRI). Disordered regions lie at residues 136-201 (EHGA…DMTQ), 329-369 (LIRR…SEDP), 415-504 (PRKK…GKNY), 566-586 (SDVR…DAGT), 637-659 (LASE…KLSN), 719-739 (EHQG…LPQL), 758-842 (ESQR…KKST), 1005-1084 (VSLV…LDFT), 1100-1341 (TVSS…EDEQ), 1379-1405 (AGDG…TPAS), 1443-1463 (GSTG…DPSK), and 1560-1628 (HLDV…TYIV). 2 stretches are compositionally biased toward basic and acidic residues: residues 147 to 156 (KQDKADKKAT) and 180 to 201 (KLDK…DMTQ). Over residues 421–434 (QSFTHNANSPQNDT) the composition is skewed to polar residues. Positions 436–453 (PVLKAKAEKRKGTLHVEK) are enriched in basic and acidic residues. The segment covering 454 to 479 (VSTNGMGSTAPASKSLSSPSFPQRSN) has biased composition (polar residues). Basic and acidic residues predominate over residues 481–490 (FRREKTEDRI). 2 stretches are compositionally biased toward basic and acidic residues: residues 758 to 773 (ESQR…RISE) and 817 to 828 (WKGEESHSREPS). Polar residues predominate over residues 1005–1023 (VSLVSDKNVPSHSQKNRIV). Basic and acidic residues predominate over residues 1045 to 1056 (ARERLSEKRRTV). A compositionally biased stretch (polar residues) spans 1129 to 1150 (RSSNAQKVQQALTRSNSLSTPR). The span at 1176 to 1193 (SNISPGTSSANSSSAKSS) shows a compositional bias: low complexity. Positions 1216 to 1227 (NVPSDSETTSSV) are enriched in polar residues. Low complexity-rich tracts occupy residues 1261-1280 (TQKQ…SSST), 1312-1328 (ASTA…SRRQ), and 1381-1398 (DGDS…SISS). Residues 1564 to 1596 (PSSNKKTSSTILTSNPLSRTTNNSAARTESQTP) show a composition bias toward polar residues. The segment covering 1606–1618 (SSSSSSRSPGSSF) has biased composition (low complexity).

This sequence belongs to the CEP170 family.

It is found in the cytoplasm. The protein localises to the cytoskeleton. Its function is as follows. Plays a role in microtubule organization. This is Centrosomal protein of 170 kDa protein B (cep170b) from Xenopus tropicalis (Western clawed frog).